We begin with the raw amino-acid sequence, 620 residues long: Glutathione-regulated potassium-efflux system protein KefC (620 aa).

Helical transmembrane passes span 4–24, 26–46, 54–74, 90–110, 114–134, 149–169, 178–198, 218–238, 270–290, 294–314, 327–347, and 359–379; these read HTLV…PIAV, LGLG…PWGL, SILH…GLEL, GALQ…LLGL, VAEL…MQAM, FAVL…IPLL, MGAF…VVLL, VFSA…EEVG, GLLL…GTLL, LRIV…LWLI, WFAV…GAAQ, and SLTL…VILN. In terms of domain architecture, RCK N-terminal spans 399–518; that stretch reads QPRVIIAGFG…AGVEKPERET (120 aa). Residues 597 to 620 form a disordered region; it reads GWQGTEEGKHTGNMADEPETKPSS.

The protein belongs to the monovalent cation:proton antiporter 2 (CPA2) transporter (TC 2.A.37) family. KefC subfamily. In terms of assembly, homodimer. Interacts with the regulatory subunit KefF.

It localises to the cell inner membrane. In terms of biological role, pore-forming subunit of a potassium efflux system that confers protection against electrophiles. Catalyzes K(+)/H(+) antiport. The protein is Glutathione-regulated potassium-efflux system protein KefC of Escherichia coli O139:H28 (strain E24377A / ETEC).